A 215-amino-acid chain; its full sequence is Leucyl/phenylalanyl-tRNA--protein transferase (215 aa).

It belongs to the L/F-transferase family.

It localises to the cytoplasm. It carries out the reaction N-terminal L-lysyl-[protein] + L-leucyl-tRNA(Leu) = N-terminal L-leucyl-L-lysyl-[protein] + tRNA(Leu) + H(+). It catalyses the reaction N-terminal L-arginyl-[protein] + L-leucyl-tRNA(Leu) = N-terminal L-leucyl-L-arginyl-[protein] + tRNA(Leu) + H(+). The enzyme catalyses L-phenylalanyl-tRNA(Phe) + an N-terminal L-alpha-aminoacyl-[protein] = an N-terminal L-phenylalanyl-L-alpha-aminoacyl-[protein] + tRNA(Phe). In terms of biological role, functions in the N-end rule pathway of protein degradation where it conjugates Leu, Phe and, less efficiently, Met from aminoacyl-tRNAs to the N-termini of proteins containing an N-terminal arginine or lysine. This Campylobacter jejuni subsp. jejuni serotype O:6 (strain 81116 / NCTC 11828) protein is Leucyl/phenylalanyl-tRNA--protein transferase.